Consider the following 182-residue polypeptide: Peptidyl-tRNA hydrolase (182 aa).

Tyr-14 lines the tRNA pocket. The Proton acceptor role is filled by His-19. 3 residues coordinate tRNA: Tyr-65, Asn-67, and Asn-113.

Belongs to the PTH family. In terms of assembly, monomer.

The protein localises to the cytoplasm. The enzyme catalyses an N-acyl-L-alpha-aminoacyl-tRNA + H2O = an N-acyl-L-amino acid + a tRNA + H(+). In terms of biological role, hydrolyzes ribosome-free peptidyl-tRNAs (with 1 or more amino acids incorporated), which drop off the ribosome during protein synthesis, or as a result of ribosome stalling. Its function is as follows. Catalyzes the release of premature peptidyl moieties from peptidyl-tRNA molecules trapped in stalled 50S ribosomal subunits, and thus maintains levels of free tRNAs and 50S ribosomes. This Rickettsia peacockii (strain Rustic) protein is Peptidyl-tRNA hydrolase.